The following is a 740-amino-acid chain: Ion-translocating oxidoreductase complex subunit C (740 aa).

2 consecutive 4Fe-4S ferredoxin-type domains span residues 369 to 397 and 407 to 436; these read GEPQ…QQLY and KATT…VQYF. Positions 377, 380, 383, 387, 416, 419, 422, and 426 each coordinate [4Fe-4S] cluster. A disordered region spans residues 602-716; sequence KLEQQQANAE…EPEEQVDPRK (115 aa).

This sequence belongs to the 4Fe4S bacterial-type ferredoxin family. RnfC subfamily. In terms of assembly, the complex is composed of six subunits: RsxA, RsxB, RsxC, RsxD, RsxE and RsxG. It depends on [4Fe-4S] cluster as a cofactor.

The protein localises to the cell inner membrane. Functionally, part of a membrane-bound complex that couples electron transfer with translocation of ions across the membrane. Required to maintain the reduced state of SoxR. This is Ion-translocating oxidoreductase complex subunit C from Escherichia coli O139:H28 (strain E24377A / ETEC).